The chain runs to 786 residues: Mitochondrial intermediate peptidase (786 aa).

The N-terminal 29 residues, 1-29 (MSSILLRSYRHHAKVWTRPSSKSSFIRSL), are a transit peptide targeting the mitochondrion. Zn(2+) is bound at residue H567. E568 is an active-site residue. Zn(2+)-binding residues include H571 and H574.

Belongs to the peptidase M3 family. Requires Zn(2+) as cofactor.

The protein resides in the mitochondrion matrix. The enzyme catalyses Release of an N-terminal octapeptide as second stage of processing of some proteins imported into the mitochondrion.. Cleaves proteins, imported into the mitochondrion, to their mature size. While most mitochondrial precursor proteins are processed to the mature form in one step by mitochondrial processing peptidase (MPP), the sequential cleavage by MIP of an octapeptide after initial processing by MPP is a required step for a subgroup of nuclear-encoded precursor proteins destined for the matrix or the inner membrane. The protein is Mitochondrial intermediate peptidase (OCT1) of Meyerozyma guilliermondii (strain ATCC 6260 / CBS 566 / DSM 6381 / JCM 1539 / NBRC 10279 / NRRL Y-324) (Yeast).